An 832-amino-acid polypeptide reads, in one-letter code: DNA polymerase I, thermostable (832 aa).

The region spanning 175–260 is the 5'-3' exonuclease domain; the sequence is RPDQWADYRA…DLPLEVDFAK (86 aa). The interval 410 to 832 is polymerase; sequence ERLFANLWGR…IGEDWLSAKE (423 aa).

The protein belongs to the DNA polymerase type-A family.

The catalysed reaction is DNA(n) + a 2'-deoxyribonucleoside 5'-triphosphate = DNA(n+1) + diphosphate. Its function is as follows. In addition to polymerase activity, this DNA polymerase exhibits 5'-3' exonuclease activity. Unlikely to have 3'-5' exonuclease activity due to absence of a 3'-5' exonuclease domain. The polypeptide is DNA polymerase I, thermostable (polA) (Thermus aquaticus).